The sequence spans 197 residues: Holliday junction branch migration complex subunit RuvA (197 aa).

Residues 1–63 (MFEYLNGKLV…EDAHSLYGFV (63 aa)) form a domain I region. Residues 64–142 (NESEKALFLR…ATGAVGISLL (79 aa)) form a domain II region. The tract at residues 142–146 (LDAAP) is flexible linker. The interval 147 to 197 (AGNLALEEAIEALQALGYKATELKKIEKKLEQEAGLTSEEYIKSALKLMMK) is domain III.

The protein belongs to the RuvA family. Homotetramer. Forms an RuvA(8)-RuvB(12)-Holliday junction (HJ) complex. HJ DNA is sandwiched between 2 RuvA tetramers; dsDNA enters through RuvA and exits via RuvB. An RuvB hexamer assembles on each DNA strand where it exits the tetramer. Each RuvB hexamer is contacted by two RuvA subunits (via domain III) on 2 adjacent RuvB subunits; this complex drives branch migration. In the full resolvosome a probable DNA-RuvA(4)-RuvB(12)-RuvC(2) complex forms which resolves the HJ.

It localises to the cytoplasm. Its function is as follows. The RuvA-RuvB-RuvC complex processes Holliday junction (HJ) DNA during genetic recombination and DNA repair, while the RuvA-RuvB complex plays an important role in the rescue of blocked DNA replication forks via replication fork reversal (RFR). RuvA specifically binds to HJ cruciform DNA, conferring on it an open structure. The RuvB hexamer acts as an ATP-dependent pump, pulling dsDNA into and through the RuvAB complex. HJ branch migration allows RuvC to scan DNA until it finds its consensus sequence, where it cleaves and resolves the cruciform DNA. This is Holliday junction branch migration complex subunit RuvA from Lactococcus lactis subsp. cremoris (strain SK11).